Consider the following 130-residue polypeptide: Small ribosomal subunit protein uS9 (130 aa).

This sequence belongs to the universal ribosomal protein uS9 family.

This chain is Small ribosomal subunit protein uS9, found in Clostridium beijerinckii (strain ATCC 51743 / NCIMB 8052) (Clostridium acetobutylicum).